The primary structure comprises 720 residues: KLSRGHSPLMKKVFDVYLCFLQKHQSEMALKNVFTALRSLIYKFPSTFYEGRADMCASLCYEVLKCCNSKLSSIRTEASQLLYFLMRNNFDYTGKKSFVRTHLQVIISLSQLIADVVGIGGTRFQQSLSIINNCANSDRLIKHTSFSSDVKDLTKRIRTVLMATAQMKEHENDPEMLVDLQYSLAKSYASTPELRKTWLDSMARIHVKNGDLSEAAMCYVHVTALVAEYLTRKEADLALQREPPVFPYSHTSCQRKSRGGMFRQGCTAFRVITPNIDEEASMMEDVGMQDVHFNEDVLMELLEQCADGLWKAERLRAGLLTSINSSSPSMKSGGTLETTHLYDTLHRPYSKVTEVITRAAGSWDLLPGGLFGQGFFEDEDGKEYIYKEPKLTPLSEISQRLLKLYSDKFGSENVKMIQDSGKVNPKDLDSKFAYIQVTHVTPFFDEKELQERKTEFERCHNIRRFMFEMPFTQTGKRQGGVEEQCKRRTILTAIHCFPYVKKRIPVMYQHHTDLNPIEVAIDEMSKKVAELHQLCSSAEVDMIKLQLKLQGSVSVQVNAGPLAYARAFLDDTNTKRYPDNKVKLLKEVFRQFVEACGQALAVNERLIKEDQLEYQEEMKANYREIRKELSDIIVPRICPGEDKRATKFPAHLQRHQRDTNKHSGSRVDQFILSCVTLPHEPHVGTCFVMCKLRTTFRANHWFCQAQEEAMGNGREKEPGL.

The region spanning Lys-186 to Cys-638 is the DOCKER domain. The interaction with CDC42 stretch occupies residues Asp-277–Cys-638.

Belongs to the DOCK family. Homodimer. Interacts preferentially with nucleotide-depleted CDC42.

It localises to the endomembrane system. Functionally, guanine nucleotide-exchange factor (GEF) that activates CDC42 by exchanging bound GDP for free GTP. Overexpression induces filopodia formation. The sequence is that of Dedicator of cytokinesis protein 9 (Dock9) from Rattus norvegicus (Rat).